Reading from the N-terminus, the 251-residue chain is Derlin-1 (251 aa).

An N-acetylserine modification is found at Ser2. Residues 2–15 (SDIGDWFRSIPTIT) are Cytoplasmic-facing. A helical transmembrane segment spans residues 16 to 31 (RYWFAATVAVPLVGKL). The Lumenal segment spans residues 32 to 69 (GLISPAYFFLWPEAFLYRFQIWRPITATFYFPVGPGTG). Residues 70–89 (FLYLVNLYFLYQYSTRLETG) traverse the membrane as a helical segment. The Cytoplasmic portion of the chain corresponds to 90–94 (AFDGR). Residues 95-115 (PADYLFMLLFNWICIVITGLA) form a helical membrane-spanning segment. The Lumenal segment spans residues 116–122 (MDMQLLM). A helical transmembrane segment spans residues 123–137 (IPLIMSVLYVWAQLN). At 138 to 154 (RDMIVSFWFGTRFKACY) the chain is on the cytoplasmic side. Residues 155-166 (LPWVILGFNYII) form a helical membrane-spanning segment. The Lumenal portion of the chain corresponds to 167–170 (GGSV). The helical transmembrane segment at 171-189 (INELIGNLVGHLYFFLMFR) threads the bilayer. At 190–251 (YPMDLGGRNF…WGQGFRLGDQ (62 aa)) the chain is on the cytoplasmic side. A Phosphoserine modification is found at Ser201. Residue Thr202 is modified to Phosphothreonine. A Phosphoserine modification is found at Ser226. Positions 229–251 (RAADQNGGGGRHNWGQGFRLGDQ) are disordered. Residues 241–248 (NWGQGFRL) carry the SHP-box motif.

The protein belongs to the derlin family. In terms of assembly, homotetramer. The four subunits of the tetramer are arranged in a twofold symmetry. Forms homo- and heterooligomers with DERL2 and DERL3; binding to DERL3 is poorer than that between DERL2 and DERL3. Interacts (via SHP-box motif) with VCP. Interacts with AMFR, SELENOS, SEL1L, SELENOK and SYVN1, as well as with SEL1L-SYVN1 and VCP-SELENOS protein complexes; this interaction is weaker than that observed between DERL2 and these complexes. Interacts with NGLY1 and YOD1. Does not bind to EDEM1. Interacts with DNAJB9. Interacts with RNF103. Interacts with HM13. Interacts with XBP1 isoform 1 (via luminal/ectodomain domain); the interaction obviates the need for ectodomain shedding prior HM13/SPP-mediated XBP1 isoform 1 cleavage. Interacts with the signal recognition particle/SRP and the SRP receptor; in the process of endoplasmic reticulum stress-induced pre-emptive quality control. May interact with UBXN6. Interacts with ZFAND2B; probably through VCP. Interacts with CCDC47. Interacts with C18orf32. May interact with TRAM1. Forms a complex with SVIP and VCP/p97.

The protein localises to the endoplasmic reticulum membrane. Its function is as follows. Functional component of endoplasmic reticulum-associated degradation (ERAD) for misfolded lumenal proteins. Forms homotetramers which encircle a large channel traversing the endoplasmic reticulum (ER) membrane. This allows the retrotranslocation of misfolded proteins from the ER into the cytosol where they are ubiquitinated and degraded by the proteasome. The channel has a lateral gate within the membrane which provides direct access to membrane proteins with no need to reenter the ER lumen first. May mediate the interaction between VCP and the misfolded protein. Also involved in endoplasmic reticulum stress-induced pre-emptive quality control, a mechanism that selectively attenuates the translocation of newly synthesized proteins into the endoplasmic reticulum and reroutes them to the cytosol for proteasomal degradation. By controlling the steady-state expression of the IGF1R receptor, indirectly regulates the insulin-like growth factor receptor signaling pathway. In Bos taurus (Bovine), this protein is Derlin-1.